Here is a 176-residue protein sequence, read N- to C-terminus: Translation initiation factor IF-3 (176 aa).

This sequence belongs to the IF-3 family. Monomer.

The protein resides in the cytoplasm. In terms of biological role, IF-3 binds to the 30S ribosomal subunit and shifts the equilibrium between 70S ribosomes and their 50S and 30S subunits in favor of the free subunits, thus enhancing the availability of 30S subunits on which protein synthesis initiation begins. In Streptococcus agalactiae serotype Ia (strain ATCC 27591 / A909 / CDC SS700), this protein is Translation initiation factor IF-3.